A 780-amino-acid chain; its full sequence is ATP-dependent 6-phosphofructokinase, liver type (780 aa).

Ala-2 carries the post-translational modification N-acetylalanine. The segment at 2–390 (AAVDLEKLRA…NWNIYKLLAH (389 aa)) is N-terminal catalytic PFK domain 1. ATP-binding positions include Gly-25, 88–89 (RC), and 118–121 (GDGS). A Mg(2+)-binding site is contributed by Asp-119. Residues 164 to 166 (SID), Arg-201, 208 to 210 (MGR), Glu-264, Arg-292, and 298 to 301 (HVQR) contribute to the substrate site. The active-site Proton acceptor is Asp-166. Position 377 is a phosphoserine (Ser-377). The segment at 391 to 400 (QKPPKEKSNF) is interdomain linker. The interval 401 to 780 (SLAILNVGAP…RRTLSMDKGF (380 aa)) is C-terminal regulatory PFK domain 2. Beta-D-fructose 2,6-bisphosphate-binding positions include Arg-470, 527–531 (TISNN), Arg-565, 572–574 (MGG), and Glu-628. Ser-529 carries O-linked (GlcNAc) serine glycosylation. At Tyr-640 the chain carries Phosphotyrosine. Beta-D-fructose 2,6-bisphosphate contacts are provided by residues Arg-654, 660 to 663 (HLQQ), and Arg-734. At Ser-775 the chain carries Phosphoserine.

This sequence belongs to the phosphofructokinase type A (PFKA) family. ATP-dependent PFK group I subfamily. Eukaryotic two domain clade 'E' sub-subfamily. As to quaternary structure, homo- and heterotetramers. Phosphofructokinase (PFK) enzyme functions as a tetramer composed of different combinations of 3 types of subunits, called PFKM (M), PFKL (L) and PFKP (P). The composition of the PFK tetramer differs according to the tissue type it is present in. The kinetic and regulatory properties of the tetrameric enzyme are dependent on the subunit composition, hence can vary across tissues. The cofactor is Mg(2+). In terms of processing, glcNAcylation at Ser-529 by OGT decreases enzyme activity, leading to redirect glucose flux through the oxidative pentose phosphate pathway. Glycosylation is stimulated by both hypoxia and glucose deprivation.

The protein localises to the cytoplasm. It catalyses the reaction beta-D-fructose 6-phosphate + ATP = beta-D-fructose 1,6-bisphosphate + ADP + H(+). It participates in carbohydrate degradation; glycolysis; D-glyceraldehyde 3-phosphate and glycerone phosphate from D-glucose: step 3/4. Allosterically activated by ADP, AMP, or fructose 2,6-bisphosphate, and allosterically inhibited by ATP or citrate. GlcNAcylation by OGT overcomes allosteric regulation. In terms of biological role, catalyzes the phosphorylation of D-fructose 6-phosphate to fructose 1,6-bisphosphate by ATP, the first committing step of glycolysis. Negatively regulates the phagocyte oxidative burst in response to bacterial infection by controlling cellular NADPH biosynthesis and NADPH oxidase-derived reactive oxygen species. Upon macrophage activation, drives the metabolic switch toward glycolysis, thus preventing glucose turnover that produces NADPH via pentose phosphate pathway. This Pongo abelii (Sumatran orangutan) protein is ATP-dependent 6-phosphofructokinase, liver type (PFKL).